A 323-amino-acid chain; its full sequence is Acetyl-coenzyme A carboxylase carboxyl transferase subunit alpha (323 aa).

The 255-residue stretch at 39-293 (RLAGKSQQLT…KRSLAESLRQ (255 aa)) folds into the CoA carboxyltransferase C-terminal domain.

It belongs to the AccA family. Acetyl-CoA carboxylase is a heterohexamer composed of biotin carboxyl carrier protein (AccB), biotin carboxylase (AccC) and two subunits each of ACCase subunit alpha (AccA) and ACCase subunit beta (AccD).

Its subcellular location is the cytoplasm. It catalyses the reaction N(6)-carboxybiotinyl-L-lysyl-[protein] + acetyl-CoA = N(6)-biotinyl-L-lysyl-[protein] + malonyl-CoA. The protein operates within lipid metabolism; malonyl-CoA biosynthesis; malonyl-CoA from acetyl-CoA: step 1/1. In terms of biological role, component of the acetyl coenzyme A carboxylase (ACC) complex. First, biotin carboxylase catalyzes the carboxylation of biotin on its carrier protein (BCCP) and then the CO(2) group is transferred by the carboxyltransferase to acetyl-CoA to form malonyl-CoA. This is Acetyl-coenzyme A carboxylase carboxyl transferase subunit alpha from Cupriavidus pinatubonensis (strain JMP 134 / LMG 1197) (Cupriavidus necator (strain JMP 134)).